Here is a 476-residue protein sequence, read N- to C-terminus: Transcription factor HBP-1b(c1) (476 aa).

3 disordered regions span residues 1–29 (ESRRGGGGPAAAAAAAGDPRGPMPGFGAP), 133–159 (HNNDNWGESSMADTSPRTDTSTDPDID), and 171–207 (QLAAPTASDSSDKSRDKLDHKSLRRLAQNREAARKSR). Over residues 10–25 (AAAAAAAGDPRGPMPG) the composition is skewed to low complexity. A compositionally biased stretch (polar residues) spans 135-144 (NDNWGESSMA). Positions 180-191 (SSDKSRDKLDHK) are enriched in basic and acidic residues. The 64-residue stretch at 189-252 (DHKSLRRLAQ…SSGDQSQSAS (64 aa)) folds into the bZIP domain. A basic motif region spans residues 191 to 211 (KSLRRLAQNREAARKSRLRKK). Positions 201 to 242 (EAARKSRLRKKAYIQNLESSRLKLTQLEQELQRARQQGIFIS) form a coiled coil. A leucine-zipper region spans residues 217 to 231 (LESSRLKLTQLEQEL). The 218-residue stretch at 256–473 (AVAFDMEYAR…RALSSLWLAR (218 aa)) folds into the DOG1 domain.

The protein belongs to the bZIP family. Binds DNA as a dimer.

It localises to the nucleus. Functionally, transcriptional activator that binds specifically to the DNA sequence 5'-TGACG-3'. Recognizes ocs elements like the as-1 motif of the cauliflower mosaic virus 35S promoter. Binding to the as-1-like cis elements mediate auxin- and salicylic acid-inducible transcription. Binds to the hexamer motif 5'-ACGTCA-3' of histone gene promoters. This Triticum aestivum (Wheat) protein is Transcription factor HBP-1b(c1).